A 332-amino-acid chain; its full sequence is 5-dehydro-2-deoxygluconokinase 1 (332 aa).

This sequence belongs to the carbohydrate kinase PfkB family.

It catalyses the reaction 5-dehydro-2-deoxy-D-gluconate + ATP = 6-phospho-5-dehydro-2-deoxy-D-gluconate + ADP + H(+). It functions in the pathway polyol metabolism; myo-inositol degradation into acetyl-CoA; acetyl-CoA from myo-inositol: step 5/7. Its function is as follows. Catalyzes the phosphorylation of 5-dehydro-2-deoxy-D-gluconate (2-deoxy-5-keto-D-gluconate or DKG) to 6-phospho-5-dehydro-2-deoxy-D-gluconate (DKGP). In Bacillus cereus (strain ZK / E33L), this protein is 5-dehydro-2-deoxygluconokinase 1.